Reading from the N-terminus, the 27-residue chain is Toxin TdII-4 (27 aa).

The LCN-type CS-alpha/beta domain maps to 1 to 27 (KDGYLMEPNGCKLGCLTRPAKYCWXEE).

It belongs to the long (4 C-C) scorpion toxin superfamily. Sodium channel inhibitor family. Beta subfamily. Expressed by the venom gland.

The protein localises to the secreted. Beta toxins bind voltage-independently at site-4 of sodium channels (Nav) and shift the voltage of activation toward more negative potentials thereby affecting sodium channel activation and promoting spontaneous and repetitive firing. This toxin is active against mammals and also affects neuromuscular preparations of frog. This chain is Toxin TdII-4, found in Tityus discrepans (Venezuelan scorpion).